The primary structure comprises 101 residues: Small ribosomal subunit protein uS14 (101 aa).

Belongs to the universal ribosomal protein uS14 family. As to quaternary structure, part of the 30S ribosomal subunit. Contacts proteins S3 and S10.

In terms of biological role, binds 16S rRNA, required for the assembly of 30S particles and may also be responsible for determining the conformation of the 16S rRNA at the A site. The chain is Small ribosomal subunit protein uS14 from Neisseria meningitidis serogroup C / serotype 2a (strain ATCC 700532 / DSM 15464 / FAM18).